We begin with the raw amino-acid sequence, 144 residues long: Universal stress protein A homolog 1 (144 aa).

It belongs to the universal stress protein A family. Homodimer.

The protein localises to the cytoplasm. Its function is as follows. Involved in stress response. This chain is Universal stress protein A homolog 1 (uspA1), found in Coxiella burnetii (strain RSA 493 / Nine Mile phase I).